Reading from the N-terminus, the 325-residue chain is Diacylglycerol acyltransferase/mycolyltransferase Ag85B (325 aa).

The signal sequence occupies residues methionine 1 to alanine 40. Leucine 82–arginine 83 contributes to the substrate binding site. A fibronectin-binding region spans residues phenylalanine 98–valine 108. Cysteine 127 and cysteine 132 are oxidised to a cystine. Positions 166 and 194 each coordinate substrate. The Nucleophile role is filled by serine 166. The active site involves glutamate 270. Residues phenylalanine 272 to serine 275, lysine 279, and histidine 302 to tryptophan 304 each bind substrate. Histidine 302 is an active-site residue.

Belongs to the mycobacterial A85 antigen family.

The protein localises to the secreted. It carries out the reaction 2 alpha,alpha'-trehalose 6-mycolate = alpha,alpha'-trehalose 6,6'-bismycolate + alpha,alpha-trehalose. It catalyses the reaction an acyl-CoA + a 1,2-diacyl-sn-glycerol = a triacyl-sn-glycerol + CoA. Its function is as follows. The antigen 85 proteins (FbpA, FbpB, FbpC) are responsible for the high affinity of mycobacteria for fibronectin, a large adhesive glycoprotein, which facilitates the attachment of M.tuberculosis to murine alveolar macrophages (AMs). They also help to maintain the integrity of the cell wall by catalyzing the transfer of mycolic acids to cell wall arabinogalactan and through the synthesis of alpha,alpha-trehalose dimycolate (TDM, cord factor). They catalyze the transfer of a mycoloyl residue from one molecule of alpha,alpha-trehalose monomycolate (TMM) to another TMM, leading to the formation of TDM. The protein is Diacylglycerol acyltransferase/mycolyltransferase Ag85B (fbpB) of Mycobacterium kansasii.